The sequence spans 154 residues: Myoglobin (154 aa).

A Globin domain is found at 2–148; that stretch reads GLSDGEWQLV…FRNDIAAKYK (147 aa). Ser-4 is subject to Phosphoserine. His-65 serves as a coordination point for nitrite. His-65 contributes to the O2 binding site. Thr-68 is subject to Phosphothreonine. His-94 serves as a coordination point for heme b.

As to quaternary structure, monomer.

It is found in the cytoplasm. It localises to the sarcoplasm. It catalyses the reaction Fe(III)-heme b-[protein] + nitric oxide + H2O = Fe(II)-heme b-[protein] + nitrite + 2 H(+). It carries out the reaction H2O2 + AH2 = A + 2 H2O. Monomeric heme protein which primary function is to store oxygen and facilitate its diffusion within muscle tissues. Reversibly binds oxygen through a pentacoordinated heme iron and enables its timely and efficient release as needed during periods of heightened demand. Depending on the oxidative conditions of tissues and cells, and in addition to its ability to bind oxygen, it also has a nitrite reductase activity whereby it regulates the production of bioactive nitric oxide. Under stress conditions, like hypoxia and anoxia, it also protects cells against reactive oxygen species thanks to its pseudoperoxidase activity. The sequence is that of Myoglobin from Hystrix cristata (North African crested porcupine).